Here is a 227-residue protein sequence, read N- to C-terminus: 2,3-bisphosphoglycerate-dependent phosphoglycerate mutase (227 aa).

Substrate contacts are provided by residues 7–14, 20–21, R59, 86–89, K97, 113–114, and 182–183; these read RHGFSEWN, TG, ERHY, RR, and GN. Catalysis depends on H8, which acts as the Tele-phosphohistidine intermediate. The active-site Proton donor/acceptor is E86.

It belongs to the phosphoglycerate mutase family. BPG-dependent PGAM subfamily. In terms of assembly, homodimer.

It catalyses the reaction (2R)-2-phosphoglycerate = (2R)-3-phosphoglycerate. It participates in carbohydrate degradation; glycolysis; pyruvate from D-glyceraldehyde 3-phosphate: step 3/5. In terms of biological role, catalyzes the interconversion of 2-phosphoglycerate and 3-phosphoglycerate. The protein is 2,3-bisphosphoglycerate-dependent phosphoglycerate mutase of Actinobacillus pleuropneumoniae serotype 5b (strain L20).